The following is a 356-amino-acid chain: Cysteine protease XCP2 (356 aa).

The signal sequence occupies residues 1–26 (MALSSPSRILCFALALSAASLSLSFA). Residues 27–137 (SSHDYSIVGY…AEFAYRDVEA (111 aa)) constitute a propeptide, activation peptide. 3 disulfides stabilise this stretch: C159/C201, C193/C234, and C292/C343. C162 is an active-site residue. N-linked (GlcNAc...) asparagine glycosylation occurs at N181. Active-site residues include H298 and N318.

Belongs to the peptidase C1 family. Interacts with PRN2. Mostly expressed in roots, stems and flowers. Confined to tracheary elements, and specifically to xylem.

Its subcellular location is the vacuole. The protein resides in the cell membrane. Cysteine protease involved in xylem tracheary element (TE) autolysis during xylogenesis in roots. Participates in micro autolysis within the intact central vacuole before mega autolysis is initiated by tonoplast implosion. Involved in susceptibility to the bacterial plant pathogen Ralstonia solanacearum. This chain is Cysteine protease XCP2, found in Arabidopsis thaliana (Mouse-ear cress).